Reading from the N-terminus, the 764-residue chain is Complement factor B (764 aa).

An N-terminal signal peptide occupies residues 1-25 (MGSNLSPQLCLMPFILGLLSGGVTT). 3 Sushi domains span residues 35-100 (GSCS…ECRA), 101-160 (IHCP…ICDN), and 163-220 (GYCS…SCQD). 6 disulfide bridges follow: C37–C76, C62–C98, C103–C145, C131–C158, C165–C205, and C191–C218. N-linked (GlcNAc...) asparagine glycosylation is found at N122 and N142. The region spanning 270 to 469 (NIYLVLDGSD…NLEDVFYQMI (200 aa)) is the VWFA domain. S278 and S280 together coordinate Mg(2+). A glycan (N-linked (GlcNAc...) asparagine) is linked at N285. A Mg(2+)-binding site is contributed by T353. The N-linked (GlcNAc...) asparagine glycan is linked to N378. The Peptidase S1 domain occupies 477-757 (LCGMVWEHRK…VLPWLKEKLQ (281 aa)). 5 disulfides stabilise this stretch: C478-C596, C511-C527, C599-C615, C656-C682, and C695-C725. Residues H526 and D576 each act as charge relay system in the active site. The active-site Charge relay system is the S699.

Belongs to the peptidase S1 family. Monomer. Interacts with complement C3b; this interaction is dependent on the presence of Mg(2+). In terms of assembly, catalytic component of the C3 convertase of the alternative complement pathway, also named C3bBb, composed of complement factor B Bb and complement C3b. Catalytic component of the C5 convertase of the alternative complement pathway, also named C3bBb3b, composed of complement factor B Bb and additional molecules of complement C3b. Interacts to CFP; this interaction contributes to the stabilization of the active C3-convertase enzyme complex. Mg(2+) is required as a cofactor. The cofactor is Mn(2+). Post-translationally, cleaved by CFD following activation of the alternative complement system, generating Ba and Bb chains. Cleavage and activation takes place when CFB is already associated with complement C3b.

The protein resides in the secreted. It is found in the cell surface. The catalysed reaction is Cleavage of Arg-|-Ser bond in complement component C3 alpha-chain to yield C3a and C3b, and Arg-|-Xaa bond in complement component C5 alpha-chain to yield C5a and C5b.. Precursor of the catalytic component of the C3 and C5 convertase complexes of the alternative pathway of the complement system, a cascade of proteins that leads to phagocytosis and breakdown of pathogens and signaling that strengthens the adaptive immune system. The alternative complement pathway acts as an amplification loop that enhances other complement pathways (classical, lectin and GZMK) by promoting formation of additional C3 and C5 convertases. CFB is cleaved and activated by CFD to generate Ba and Bb chains; Bb chain constituting the catalytic component of the C3 and C5 convertases. Its function is as follows. Serine protease component of the complement C3 and C5 convertase complexes of the alternative complement pathway. Following cleavage and activation by factor D (CFD), forms the C3 convertase together with complement C3b. As part of the C3 convertase, cleaves and activates C3 into C3a anaphylatoxin and C3b opsonin, the next components of the complement pathways. When an additional complement C3b molecule binds to the C3 convertase, forms the C5 convertase, which cleaves and activates C5 into C5a anaphylatoxin and C5b component of the membrane attack complex. In terms of biological role, involved in proliferation and differentiation of preactivated B-lymphocytes, rapid spreading of peripheral blood monocytes, stimulation of lymphocyte blastogenesis and lysis of erythrocytes. This is Complement factor B (CFB) from Gorilla gorilla gorilla (Western lowland gorilla).